A 137-amino-acid polypeptide reads, in one-letter code: Small ribosomal subunit protein bS6 (137 aa).

This sequence belongs to the bacterial ribosomal protein bS6 family.

Its function is as follows. Binds together with bS18 to 16S ribosomal RNA. In Sulfurimonas denitrificans (strain ATCC 33889 / DSM 1251) (Thiomicrospira denitrificans (strain ATCC 33889 / DSM 1251)), this protein is Small ribosomal subunit protein bS6.